The sequence spans 364 residues: tRNA 2-selenouridine synthase (364 aa).

Residues 14–137 (LIADTPIIDV…LRQTTIQATI (124 aa)) enclose the Rhodanese domain. Cysteine 97 (S-selanylcysteine intermediate) is an active-site residue.

It belongs to the SelU family. Monomer.

The catalysed reaction is 5-methylaminomethyl-2-thiouridine(34) in tRNA + selenophosphate + (2E)-geranyl diphosphate + H2O + H(+) = 5-methylaminomethyl-2-selenouridine(34) in tRNA + (2E)-thiogeraniol + phosphate + diphosphate. It catalyses the reaction 5-methylaminomethyl-2-thiouridine(34) in tRNA + (2E)-geranyl diphosphate = 5-methylaminomethyl-S-(2E)-geranyl-thiouridine(34) in tRNA + diphosphate. The enzyme catalyses 5-methylaminomethyl-S-(2E)-geranyl-thiouridine(34) in tRNA + selenophosphate + H(+) = 5-methylaminomethyl-2-(Se-phospho)selenouridine(34) in tRNA + (2E)-thiogeraniol. It carries out the reaction 5-methylaminomethyl-2-(Se-phospho)selenouridine(34) in tRNA + H2O = 5-methylaminomethyl-2-selenouridine(34) in tRNA + phosphate. Its function is as follows. Involved in the post-transcriptional modification of the uridine at the wobble position (U34) of tRNA(Lys), tRNA(Glu) and tRNA(Gln). Catalyzes the conversion of 2-thiouridine (S2U-RNA) to 2-selenouridine (Se2U-RNA). Acts in a two-step process involving geranylation of 2-thiouridine (S2U) to S-geranyl-2-thiouridine (geS2U) and subsequent selenation of the latter derivative to 2-selenouridine (Se2U) in the tRNA chain. This chain is tRNA 2-selenouridine synthase, found in Escherichia coli O8 (strain IAI1).